A 502-amino-acid polypeptide reads, in one-letter code: Glycerol kinase (502 aa).

Residue Thr-12 coordinates ADP. The ATP site is built by Thr-12, Thr-13, and Ser-14. Thr-12 provides a ligand contact to sn-glycerol 3-phosphate. Residue Arg-16 coordinates ADP. Positions 82, 83, 134, and 243 each coordinate sn-glycerol 3-phosphate. Glycerol-binding residues include Arg-82, Glu-83, Tyr-134, Asp-243, and Gln-244. The ADP site is built by Thr-265 and Gly-308. Residues Thr-265, Gly-308, Gln-312, and Gly-412 each contribute to the ATP site. Gly-412 contacts ADP.

It belongs to the FGGY kinase family.

The catalysed reaction is glycerol + ATP = sn-glycerol 3-phosphate + ADP + H(+). Its pathway is polyol metabolism; glycerol degradation via glycerol kinase pathway; sn-glycerol 3-phosphate from glycerol: step 1/1. Inhibited by fructose 1,6-bisphosphate (FBP). Its function is as follows. Key enzyme in the regulation of glycerol uptake and metabolism. Catalyzes the phosphorylation of glycerol to yield sn-glycerol 3-phosphate. The polypeptide is Glycerol kinase (Methylobacterium nodulans (strain LMG 21967 / CNCM I-2342 / ORS 2060)).